The primary structure comprises 87 residues: DNA-directed RNA polymerase subunit omega (87 aa).

This sequence belongs to the RNA polymerase subunit omega family. The RNAP catalytic core consists of 2 alpha, 1 beta, 1 beta' and 1 omega subunit. When a sigma factor is associated with the core the holoenzyme is formed, which can initiate transcription.

It carries out the reaction RNA(n) + a ribonucleoside 5'-triphosphate = RNA(n+1) + diphosphate. Its function is as follows. Promotes RNA polymerase assembly. Latches the N- and C-terminal regions of the beta' subunit thereby facilitating its interaction with the beta and alpha subunits. The chain is DNA-directed RNA polymerase subunit omega from Thioalkalivibrio sulfidiphilus (strain HL-EbGR7).